The sequence spans 248 residues: Cell division protein ZapD (248 aa).

It belongs to the ZapD family. Interacts with FtsZ.

It localises to the cytoplasm. Its function is as follows. Cell division factor that enhances FtsZ-ring assembly. Directly interacts with FtsZ and promotes bundling of FtsZ protofilaments, with a reduction in FtsZ GTPase activity. The sequence is that of Cell division protein ZapD from Aliivibrio salmonicida (strain LFI1238) (Vibrio salmonicida (strain LFI1238)).